The following is a 375-amino-acid chain: 23S rRNA (uracil(747)-C(5))-methyltransferase RlmC (375 aa).

[4Fe-4S] cluster contacts are provided by cysteine 3, cysteine 11, cysteine 14, and cysteine 87. S-adenosyl-L-methionine is bound by residues glutamine 212, phenylalanine 241, glutamate 262, and asparagine 307. The Nucleophile role is filled by cysteine 334.

This sequence belongs to the class I-like SAM-binding methyltransferase superfamily. RNA M5U methyltransferase family. RlmC subfamily.

It carries out the reaction uridine(747) in 23S rRNA + S-adenosyl-L-methionine = 5-methyluridine(747) in 23S rRNA + S-adenosyl-L-homocysteine + H(+). In terms of biological role, catalyzes the formation of 5-methyl-uridine at position 747 (m5U747) in 23S rRNA. The protein is 23S rRNA (uracil(747)-C(5))-methyltransferase RlmC of Escherichia fergusonii (strain ATCC 35469 / DSM 13698 / CCUG 18766 / IAM 14443 / JCM 21226 / LMG 7866 / NBRC 102419 / NCTC 12128 / CDC 0568-73).